The sequence spans 994 residues: Phosphoenolpyruvate carboxylase (994 aa).

Residues 1-67 (MKAVRSDKTT…GRTREDKDHP (67 aa)) are disordered. Composition is skewed to low complexity over residues 9–24 (TTQA…PAKA) and 34–57 (AAPQ…PKAN). Catalysis depends on residues H204 and K646.

Belongs to the PEPCase type 1 family. It depends on Mg(2+) as a cofactor.

It carries out the reaction oxaloacetate + phosphate = phosphoenolpyruvate + hydrogencarbonate. Forms oxaloacetate, a four-carbon dicarboxylic acid source for the tricarboxylic acid cycle. The sequence is that of Phosphoenolpyruvate carboxylase from Paraburkholderia xenovorans (strain LB400).